Consider the following 529-residue polypeptide: Beta-glucosidase 11 (529 aa).

An N-terminal signal peptide occupies residues 1–25 (MAVAGAMVMSGALLLLHLLAFTCVA). A beta-D-glucoside-binding positions include Gln54, His157, and 202-203 (NE). The active-site Proton donor is Glu203. Cys222 and Cys230 are disulfide-bonded. Residue Tyr346 coordinates a beta-D-glucoside. Asn361 is a glycosylation site (N-linked (GlcNAc...) asparagine). Glu417 is a binding site for a beta-D-glucoside. Glu417 functions as the Nucleophile in the catalytic mechanism. Asn425 carries N-linked (GlcNAc...) asparagine glycosylation. A beta-D-glucoside-binding positions include Trp466, 473 to 474 (EW), and Phe482.

It belongs to the glycosyl hydrolase 1 family.

The enzyme catalyses Hydrolysis of terminal, non-reducing beta-D-glucosyl residues with release of beta-D-glucose.. The polypeptide is Beta-glucosidase 11 (BGLU11) (Oryza sativa subsp. japonica (Rice)).